The sequence spans 225 residues: MLVKIVLVVLLTLALVFECFSTISVPITIGLYISEYNGYRFGVFGWCKVDRSVCSPIRIGYSKDDILLFNEQEYLHLPNHAKYALSNLLLVHVLAFVCVTILWVFGMLTCFRCIKTSRRMLIIAVLWSMLTFMVTLLGFLIDILIFSSHVTWCTWLTLASAFFTVLSGTVLCVMRRNLTYDKFLESKPEKHGVYVPLCRLNDVEELEIPWCNTMNHQALTAPTPM.

Topologically, residues 1–4 (MLVK) are cytoplasmic. A helical membrane pass occupies residues 5-25 (IVLVVLLTLALVFECFSTISV). Residues 26 to 87 (PITIGLYISE…PNHAKYALSN (62 aa)) lie on the Extracellular side of the membrane. The chain crosses the membrane as a helical span at residues 88–108 (LLLVHVLAFVCVTILWVFGML). Topologically, residues 109–120 (TCFRCIKTSRRM) are cytoplasmic. The helical transmembrane segment at 121 to 141 (LIIAVLWSMLTFMVTLLGFLI) threads the bilayer. The Extracellular portion of the chain corresponds to 142-153 (DILIFSSHVTWC). A helical membrane pass occupies residues 154 to 174 (TWLTLASAFFTVLSGTVLCVM). The Cytoplasmic portion of the chain corresponds to 175-225 (RRNLTYDKFLESKPEKHGVYVPLCRLNDVEELEIPWCNTMNHQALTAPTPM).

The protein belongs to the palI/RIM9 family.

The protein localises to the cell membrane. Functionally, required for the proteolytic cleavage of the transcription factor RIM101 in response to alkaline ambient pH. The sequence is that of pH-response regulator palI/RIM9 homolog 2 from Kluyveromyces lactis (strain ATCC 8585 / CBS 2359 / DSM 70799 / NBRC 1267 / NRRL Y-1140 / WM37) (Yeast).